We begin with the raw amino-acid sequence, 944 residues long: Isoleucine--tRNA ligase (944 aa).

The 'HIGH' region motif lies at 58–68 (PYANGSIHIGH). Residue Glu-563 participates in L-isoleucyl-5'-AMP binding. Residues 604–608 (KMSKS) carry the 'KMSKS' region motif. ATP is bound at residue Lys-607. Zn(2+)-binding residues include Cys-907, Cys-910, Cys-927, and Cys-930.

The protein belongs to the class-I aminoacyl-tRNA synthetase family. IleS type 1 subfamily. Monomer. Zn(2+) is required as a cofactor.

Its subcellular location is the cytoplasm. It catalyses the reaction tRNA(Ile) + L-isoleucine + ATP = L-isoleucyl-tRNA(Ile) + AMP + diphosphate. Functionally, catalyzes the attachment of isoleucine to tRNA(Ile). As IleRS can inadvertently accommodate and process structurally similar amino acids such as valine, to avoid such errors it has two additional distinct tRNA(Ile)-dependent editing activities. One activity is designated as 'pretransfer' editing and involves the hydrolysis of activated Val-AMP. The other activity is designated 'posttransfer' editing and involves deacylation of mischarged Val-tRNA(Ile). This chain is Isoleucine--tRNA ligase, found in Salmonella paratyphi A (strain ATCC 9150 / SARB42).